A 671-amino-acid chain; its full sequence is UvrABC system protein B (671 aa).

The region spanning 31-189 is the Helicase ATP-binding domain; it reads KGFEEGKKEQ…QLVDIQFDRN (159 aa). Residue 44–51 participates in ATP binding; the sequence is GATGTGKT. The short motif at 97 to 120 is the Beta-hairpin element; the sequence is YYDYYQPEAYVPSTDTYIEKDSAI. Residues 437–599 form the Helicase C-terminal domain; it reads QIDDLVGEIN…ITPKTIIKPI (163 aa). Residues 634–669 form the UVR domain; that stretch reads KELVANLRSQMQAAAKKLDFEQAASLRDTILELQAD.

Belongs to the UvrB family. In terms of assembly, forms a heterotetramer with UvrA during the search for lesions. Interacts with UvrC in an incision complex.

The protein resides in the cytoplasm. Functionally, the UvrABC repair system catalyzes the recognition and processing of DNA lesions. A damage recognition complex composed of 2 UvrA and 2 UvrB subunits scans DNA for abnormalities. Upon binding of the UvrA(2)B(2) complex to a putative damaged site, the DNA wraps around one UvrB monomer. DNA wrap is dependent on ATP binding by UvrB and probably causes local melting of the DNA helix, facilitating insertion of UvrB beta-hairpin between the DNA strands. Then UvrB probes one DNA strand for the presence of a lesion. If a lesion is found the UvrA subunits dissociate and the UvrB-DNA preincision complex is formed. This complex is subsequently bound by UvrC and the second UvrB is released. If no lesion is found, the DNA wraps around the other UvrB subunit that will check the other stand for damage. The protein is UvrABC system protein B of Lacticaseibacillus casei (strain BL23) (Lactobacillus casei).